We begin with the raw amino-acid sequence, 143 residues long: UPF0201 protein Tneu_0685 (143 aa).

This sequence belongs to the UPF0201 family.

The protein is UPF0201 protein Tneu_0685 of Pyrobaculum neutrophilum (strain DSM 2338 / JCM 9278 / NBRC 100436 / V24Sta) (Thermoproteus neutrophilus).